The sequence spans 503 residues: Probable cytosol aminopeptidase (503 aa).

Mn(2+) is bound by residues Lys272 and Asp277. Lys284 is a catalytic residue. Mn(2+)-binding residues include Asp295, Asp354, and Glu356. Residue Arg358 is part of the active site.

This sequence belongs to the peptidase M17 family. It depends on Mn(2+) as a cofactor.

The protein localises to the cytoplasm. The enzyme catalyses Release of an N-terminal amino acid, Xaa-|-Yaa-, in which Xaa is preferably Leu, but may be other amino acids including Pro although not Arg or Lys, and Yaa may be Pro. Amino acid amides and methyl esters are also readily hydrolyzed, but rates on arylamides are exceedingly low.. It catalyses the reaction Release of an N-terminal amino acid, preferentially leucine, but not glutamic or aspartic acids.. Presumably involved in the processing and regular turnover of intracellular proteins. Catalyzes the removal of unsubstituted N-terminal amino acids from various peptides. This chain is Probable cytosol aminopeptidase, found in Chlorobium limicola (strain DSM 245 / NBRC 103803 / 6330).